We begin with the raw amino-acid sequence, 191 residues long: MSIQNSLPDYQSFDETLHQQSVALTAAEMHGLISGLLCGGNRDSSWQVLVHDLANDGLAFSHPLAQKLRELREITFESLDDSNFAFGLLLPDEEDNVFERADALAGWVNHFLLGLGVAQPKFADRKEISEIIGDLRNIGLLGYEEGDDQEELSQALEEVLEYVQVAAQLCYIAFTEPKTVLIAKNDKPTLH.

Belongs to the UPF0149 family.

This is UPF0149 protein plu3602 from Photorhabdus laumondii subsp. laumondii (strain DSM 15139 / CIP 105565 / TT01) (Photorhabdus luminescens subsp. laumondii).